A 64-amino-acid polypeptide reads, in one-letter code: Large ribosomal subunit protein bL33 (64 aa).

It belongs to the bacterial ribosomal protein bL33 family.

The polypeptide is Large ribosomal subunit protein bL33 (Crocosphaera subtropica (strain ATCC 51142 / BH68) (Cyanothece sp. (strain ATCC 51142))).